A 124-amino-acid chain; its full sequence is 14 kDa peptide of ubiquinol-cytochrome c2 oxidoreductase complex (124 aa).

A helical membrane pass occupies residues 85 to 102 (LGGFASGALLALALAGIF).

The protein localises to the cell inner membrane. In terms of biological role, component of the ubiquinol-cytochrome c reductase complex (complex III or cytochrome b-c1 complex), which is a respiratory chain that generates an electrochemical potential coupled to ATP synthesis. The chain is 14 kDa peptide of ubiquinol-cytochrome c2 oxidoreductase complex from Cereibacter sphaeroides (Rhodobacter sphaeroides).